The primary structure comprises 226 residues: 7-cyano-7-deazaguanine synthase (226 aa).

An ATP-binding site is contributed by 8–18 (LSGGLDSTTTL). Cysteine 188, cysteine 198, cysteine 201, and cysteine 204 together coordinate Zn(2+).

The protein belongs to the QueC family. Zn(2+) is required as a cofactor.

The enzyme catalyses 7-carboxy-7-deazaguanine + NH4(+) + ATP = 7-cyano-7-deazaguanine + ADP + phosphate + H2O + H(+). It functions in the pathway purine metabolism; 7-cyano-7-deazaguanine biosynthesis. Its function is as follows. Catalyzes the ATP-dependent conversion of 7-carboxy-7-deazaguanine (CDG) to 7-cyano-7-deazaguanine (preQ(0)). The chain is 7-cyano-7-deazaguanine synthase from Nitrosomonas eutropha (strain DSM 101675 / C91 / Nm57).